The following is a 189-amino-acid chain: Hypoxanthine/guanine phosphoribosyltransferase (189 aa).

The protein belongs to the purine/pyrimidine phosphoribosyltransferase family. Archaeal HPRT subfamily. Homodimer.

The protein localises to the cytoplasm. It catalyses the reaction IMP + diphosphate = hypoxanthine + 5-phospho-alpha-D-ribose 1-diphosphate. It carries out the reaction GMP + diphosphate = guanine + 5-phospho-alpha-D-ribose 1-diphosphate. The protein operates within purine metabolism; IMP biosynthesis via salvage pathway; IMP from hypoxanthine: step 1/1. In terms of biological role, catalyzes a salvage reaction resulting in the formation of IMP that is energically less costly than de novo synthesis. The protein is Hypoxanthine/guanine phosphoribosyltransferase of Methanothermus fervidus (strain ATCC 43054 / DSM 2088 / JCM 10308 / V24 S).